The chain runs to 181 residues: Oligoribonuclease (181 aa).

The region spanning 8–171 (LIWVDLEMTG…EDIKESIAEM (164 aa)) is the Exonuclease domain. Residue Tyr-129 is part of the active site.

Belongs to the oligoribonuclease family.

The protein localises to the cytoplasm. 3'-to-5' exoribonuclease specific for small oligoribonucleotides. The protein is Oligoribonuclease of Shewanella frigidimarina (strain NCIMB 400).